Consider the following 597-residue polypeptide: Medium/long-chain-fatty-acid--CoA ligase FadD6 (597 aa).

This sequence belongs to the ATP-dependent AMP-binding enzyme family.

It carries out the reaction a medium-chain fatty acid + ATP + CoA = a medium-chain fatty acyl-CoA + AMP + diphosphate. The catalysed reaction is a long-chain fatty acid + ATP + CoA = a long-chain fatty acyl-CoA + AMP + diphosphate. The enzyme catalyses hexanoate + ATP + CoA = hexanoyl-CoA + AMP + diphosphate. It catalyses the reaction octanoate + ATP + CoA = octanoyl-CoA + AMP + diphosphate. It carries out the reaction decanoate + ATP + CoA = decanoyl-CoA + AMP + diphosphate. The catalysed reaction is dodecanoate + ATP + CoA = dodecanoyl-CoA + AMP + diphosphate. The enzyme catalyses tetradecanoate + ATP + CoA = tetradecanoyl-CoA + AMP + diphosphate. It catalyses the reaction hexadecanoate + ATP + CoA = hexadecanoyl-CoA + AMP + diphosphate. It carries out the reaction octadecanoate + ATP + CoA = octadecanoyl-CoA + AMP + diphosphate. The catalysed reaction is 9-decenoate + ATP + CoA = 9-decenoyl-CoA + AMP + diphosphate. The enzyme catalyses (9Z)-octadecenoate + ATP + CoA = (9Z)-octadecenoyl-CoA + AMP + diphosphate. It catalyses the reaction 2-hydroxyhexadecanoate + ATP + CoA = 2-hydroxyhexadecanoyl-CoA + AMP + diphosphate. It carries out the reaction 3-hydroxytetradecanoate + ATP + CoA = 3-hydroxytetradecanoyl-CoA + AMP + diphosphate. The catalysed reaction is 12-hydroxyoctadecanoate + ATP + CoA = 12-hydroxyoctadecanoyl-CoA + AMP + diphosphate. The enzyme catalyses 15-hydroxypentadecanoate + ATP + CoA = 15-hydroxypentadecanoyl-CoA + AMP + diphosphate. It catalyses the reaction 16-hydroxyhexadecanoate + ATP + CoA = 16-hydroxyhexadecanoyl-CoA + AMP + diphosphate. It carries out the reaction 2-methylhexadecanoate + ATP + CoA = 2-methylhexadecanoyl-CoA + AMP + diphosphate. The catalysed reaction is 3-methylundecanoate + ATP + CoA = 3-methylundecanoyl-CoA + AMP + diphosphate. The enzyme catalyses 12-methyltridecanoate + ATP + CoA = 12-methyltridecanoyl-CoA + AMP + diphosphate. It catalyses the reaction 12-methyloctadecanoate + ATP + CoA = 12-methyloctadecanoyl-CoA + AMP + diphosphate. In terms of biological role, catalyzes the activation of medium/long-chain fatty acids as acyl-coenzyme A (acyl-CoA). May play a role in the uptake of fatty acids by trapping them metabolically as CoA esters. May also play an important role in the channeling of fatty acids into triacylglycerol (TAG) for use by Mycobacterium during its dormancy. In Mycobacterium tuberculosis (strain ATCC 25618 / H37Rv), this protein is Medium/long-chain-fatty-acid--CoA ligase FadD6.